The following is a 308-amino-acid chain: MRPEGSLTYRVPERLRQGFCGVGRAAQALVCASAKEGTAFRMEAVQEGAAGVESEQAALGEEAVLLLDDIMAEVEVVAEEEGLVERREEAQRAQQAVPGPGPMTPESALEELLAVQVELEPVNAQARKAFSRQREKMERRRKPHLDRRGAVIQSVPGFWANVIANHPQMSALITDEDEDMLSYMVSLEVEEEKHPVHLCKIMLFFRSNPYFQNKVITKEYLVNITEYRASHSTPIEWYPDYEVEAYRRRHHNSSLNFFNWFSDHNFAGSNKIAEILCKDLWRNPLQYYKRMKPPEEGTETSGDSQLLS.

It belongs to the nucleosome assembly protein (NAP) family.

It is found in the cytoplasm. The protein localises to the nucleus. Functionally, may be involved in sperm differentiation and proliferation. This chain is Testis-specific Y-encoded protein 3 (TSPY3), found in Homo sapiens (Human).